Here is a 155-residue protein sequence, read N- to C-terminus: Basic phospholipase A2 PC1 (155 aa).

Positions 1–21 are cleaved as a signal peptide; it reads MYPAHLLVLLAVCVSLLGASA. Positions 22–27 are excised as a propeptide; the sequence is ISNRPR. 7 disulfide bridges follow: Cys38/Cys98, Cys54/Cys144, Cys56/Cys72, Cys71/Cys125, Cys78/Cys118, Cys87/Cys111, and Cys105/Cys116. Positions 55, 57, and 59 each coordinate Ca(2+). His75 is a catalytic residue. Ca(2+) is bound at residue Asp76. Asp119 is an active-site residue.

Belongs to the phospholipase A2 family. Group I subfamily. D49 sub-subfamily. Ca(2+) is required as a cofactor. Expressed by the venom gland.

Its subcellular location is the secreted. It catalyses the reaction a 1,2-diacyl-sn-glycero-3-phosphocholine + H2O = a 1-acyl-sn-glycero-3-phosphocholine + a fatty acid + H(+). In terms of biological role, snake venom phospholipase A2 (PLA2) that inhibits neuromuscular transmission by blocking acetylcholine release from the nerve termini. PLA2 catalyzes the calcium-dependent hydrolysis of the 2-acyl groups in 3-sn-phosphoglycerides. This chain is Basic phospholipase A2 PC1, found in Laticauda colubrina (Yellow-lipped sea krait).